A 218-amino-acid polypeptide reads, in one-letter code: Ribonuclease HII (218 aa).

The RNase H type-2 domain occupies 23–216 (RFLCGVDEAG…VREAIARGLV (194 aa)). Positions 29, 30, and 125 each coordinate a divalent metal cation.

It belongs to the RNase HII family. Mn(2+) serves as cofactor. It depends on Mg(2+) as a cofactor.

Its subcellular location is the cytoplasm. The catalysed reaction is Endonucleolytic cleavage to 5'-phosphomonoester.. Functionally, endonuclease that specifically degrades the RNA of RNA-DNA hybrids. This is Ribonuclease HII from Cupriavidus pinatubonensis (strain JMP 134 / LMG 1197) (Cupriavidus necator (strain JMP 134)).